The sequence spans 281 residues: ATP phosphoribosyltransferase (281 aa).

It belongs to the ATP phosphoribosyltransferase family. Long subfamily. Requires Mg(2+) as cofactor.

The protein resides in the cytoplasm. The catalysed reaction is 1-(5-phospho-beta-D-ribosyl)-ATP + diphosphate = 5-phospho-alpha-D-ribose 1-diphosphate + ATP. It functions in the pathway amino-acid biosynthesis; L-histidine biosynthesis; L-histidine from 5-phospho-alpha-D-ribose 1-diphosphate: step 1/9. Its activity is regulated as follows. Feedback inhibited by histidine. Its function is as follows. Catalyzes the condensation of ATP and 5-phosphoribose 1-diphosphate to form N'-(5'-phosphoribosyl)-ATP (PR-ATP). Has a crucial role in the pathway because the rate of histidine biosynthesis seems to be controlled primarily by regulation of HisG enzymatic activity. This Corynebacterium diphtheriae (strain ATCC 700971 / NCTC 13129 / Biotype gravis) protein is ATP phosphoribosyltransferase.